The primary structure comprises 365 residues: Methionine import ATP-binding protein MetN (365 aa).

One can recognise an ABC transporter domain in the interval 26–261 (VRLVDLKRRF…PQSDITKSLL (236 aa)). 58-65 (GRSGAGKS) contacts ATP.

This sequence belongs to the ABC transporter superfamily. Methionine importer (TC 3.A.1.24) family. In terms of assembly, the complex is composed of two ATP-binding proteins (MetN), two transmembrane proteins (MetI) and a solute-binding protein (MetQ).

The protein localises to the cell inner membrane. The catalysed reaction is L-methionine(out) + ATP + H2O = L-methionine(in) + ADP + phosphate + H(+). It catalyses the reaction D-methionine(out) + ATP + H2O = D-methionine(in) + ADP + phosphate + H(+). Part of the ABC transporter complex MetNIQ involved in methionine import. Responsible for energy coupling to the transport system. The sequence is that of Methionine import ATP-binding protein MetN from Mesorhizobium japonicum (strain LMG 29417 / CECT 9101 / MAFF 303099) (Mesorhizobium loti (strain MAFF 303099)).